The primary structure comprises 997 residues: DNA polymerase I (997 aa).

Residues 174–261 (VMPTQLLDLF…VPCVFSLEDS (88 aa)) form the 5'-3' exonuclease domain. In terms of domain architecture, 3'-5' exonuclease spans 428–589 (VPDVSLHTES…LYHYLKLRLE (162 aa)).

The protein belongs to the DNA polymerase type-A family.

It catalyses the reaction DNA(n) + a 2'-deoxyribonucleoside 5'-triphosphate = DNA(n+1) + diphosphate. Its function is as follows. In addition to polymerase activity, this DNA polymerase exhibits 3'-5' and 5'-3' exonuclease activity. This is DNA polymerase I (polA) from Treponema pallidum (strain Nichols).